Here is a 113-residue protein sequence, read N- to C-terminus: Hydrogenase maturation factor HypA (113 aa).

Position 2 (His-2) interacts with Ni(2+). Residues Cys-73, Cys-76, Cys-89, and Cys-92 each contribute to the Zn(2+) site.

Belongs to the HypA/HybF family.

Involved in the maturation of [NiFe] hydrogenases. Required for nickel insertion into the metal center of the hydrogenase. The protein is Hydrogenase maturation factor HypA of Legionella pneumophila (strain Paris).